Here is a 161-residue protein sequence, read N- to C-terminus: Ribonuclease P protein component (161 aa).

Belongs to the RnpA family. As to quaternary structure, consists of a catalytic RNA component (M1 or rnpB) and a protein subunit.

The catalysed reaction is Endonucleolytic cleavage of RNA, removing 5'-extranucleotides from tRNA precursor.. Its function is as follows. RNaseP catalyzes the removal of the 5'-leader sequence from pre-tRNA to produce the mature 5'-terminus. It can also cleave other RNA substrates such as 4.5S RNA. The protein component plays an auxiliary but essential role in vivo by binding to the 5'-leader sequence and broadening the substrate specificity of the ribozyme. The polypeptide is Ribonuclease P protein component (Helicobacter pylori (strain Shi470)).